The chain runs to 510 residues: Lysine--tRNA ligase (510 aa).

Positions 420 and 427 each coordinate Mg(2+).

Belongs to the class-II aminoacyl-tRNA synthetase family. As to quaternary structure, homodimer. Mg(2+) serves as cofactor.

The protein resides in the cytoplasm. It carries out the reaction tRNA(Lys) + L-lysine + ATP = L-lysyl-tRNA(Lys) + AMP + diphosphate. This is Lysine--tRNA ligase from Clostridium novyi (strain NT).